Consider the following 550-residue polypeptide: MNRLTNISKIRKSLIDGKLKVNDLVLNKIKEINKVSPNHLNTFISLQDEKSLGKQIKESQERYDNGTNKRLDGIPIGVKDNFSSKNFKTTCGSKILENYIPSFDSTVVKLLKEEGAIIIGKTNMDEFSMGSSSTSGHFGKVINPWSKPNNNNNNDNDNNNNGEVLYVAGGSSGGSAAAVASNYCVASIGSDTGGSIRQPSSYCGVVGFKPSYGLISRFGLVAYASSLDTPGVLTNNVEDAAELLDILIKKDQENDSTSIEFINNNQNQNQNNGEKRNILDEFNEKLKNKNIKDLVFGIPKDYLVKELDTDILNLWKEVVEEIEKRGGKVVSVSLPHTRYALPAYYLLATSEASSNLSRFDGVRYGYRFEEEKDENKVDNDNDDDDDVDENKIGMGLKDMYTKTRTNGFGEEVKKRIILGTMALSRSSYDNFYTKAQKIRRLVSDDFKNVFQGENKVDILITPTAPSPAFKQNEKMDPIEVYVNDIMTIPSNLAGLPACSIPLKLSNSNLPISVQLISNRLTDDNLLFAAHTIMNFDCYKDFTSLTPNYLK.

Active-site charge relay system residues include Lys79 and Ser171. Catalysis depends on Ser195, which acts as the Acyl-ester intermediate. The disordered stretch occupies residues 371 to 390; that stretch reads EKDENKVDNDNDDDDDVDEN.

Belongs to the amidase family. GatA subfamily. In terms of assembly, subunit of the heterotrimeric GatCAB amidotransferase (AdT) complex, composed of A, B and C subunits.

It is found in the mitochondrion. It catalyses the reaction L-glutamyl-tRNA(Gln) + L-glutamine + ATP + H2O = L-glutaminyl-tRNA(Gln) + L-glutamate + ADP + phosphate + H(+). Functionally, allows the formation of correctly charged Gln-tRNA(Gln) through the transamidation of misacylated Glu-tRNA(Gln) in the mitochondria. The reaction takes place in the presence of glutamine and ATP through an activated gamma-phospho-Glu-tRNA(Gln). This Dictyostelium discoideum (Social amoeba) protein is Glutamyl-tRNA(Gln) amidotransferase subunit A, mitochondrial.